A 227-amino-acid chain; its full sequence is Ribosomal RNA large subunit methyltransferase E (227 aa).

S-adenosyl-L-methionine contacts are provided by Gly78, Trp80, Asp103, Asp119, and Asp143. The Proton acceptor role is filled by Lys183.

The protein belongs to the class I-like SAM-binding methyltransferase superfamily. RNA methyltransferase RlmE family.

It is found in the cytoplasm. It carries out the reaction uridine(2552) in 23S rRNA + S-adenosyl-L-methionine = 2'-O-methyluridine(2552) in 23S rRNA + S-adenosyl-L-homocysteine + H(+). Specifically methylates the uridine in position 2552 of 23S rRNA at the 2'-O position of the ribose in the fully assembled 50S ribosomal subunit. This is Ribosomal RNA large subunit methyltransferase E from Rickettsia peacockii (strain Rustic).